A 199-amino-acid polypeptide reads, in one-letter code: MADPGVPGRYESGTGNLGVKEAAGPGGALVELTPTPGGLALVSPYHTHRVGDPLDLVALAEQVQKADEFIRANATNKLTVIAEQIQHLQEQARKVLEDARRDADLHHAACNMVKKPGNIYYLYQRESGQQYFSIISPEEWGTGCPHDFLGAYKLQHDMSWTPYEDVEKQDAKIGMMDKLLSQPMALPPCTEPTFQGLPH.

A coiled-coil region spans residues 71-104; it reads RANATNKLTVIAEQIQHLQEQARKVLEDARRDAD.

This is an uncharacterized protein from Mus musculus (Mouse).